A 192-amino-acid chain; its full sequence is Ion-translocating oxidoreductase complex subunit A (192 aa).

6 consecutive transmembrane segments (helical) span residues 5–25 (LLLLISTVLVNNFVLVKFLGL), 39–59 (IGMSMATTFVLTLASILSYLV), 65–85 (LPFDLGYLRTMSFILVIAVVV), 102–122 (ALGIYLPLITTNCAVLGVALL), 134–154 (AIYGFGAAVGFSLVLILFSAM), and 171–191 (AIAMITAGLMSLAFMGFTGLV).

It belongs to the NqrDE/RnfAE family. The complex is composed of six subunits: RnfA, RnfB, RnfC, RnfD, RnfE and RnfG.

It is found in the cell inner membrane. Functionally, part of a membrane-bound complex that couples electron transfer with translocation of ions across the membrane. The sequence is that of Ion-translocating oxidoreductase complex subunit A from Shewanella oneidensis (strain ATCC 700550 / JCM 31522 / CIP 106686 / LMG 19005 / NCIMB 14063 / MR-1).